Consider the following 367-residue polypeptide: tRNA-specific 2-thiouridylase MnmA (367 aa).

Residues 14 to 21 (AMSGGVDS) and Leu-40 contribute to the ATP site. Cys-108 serves as the catalytic Nucleophile. Residues Cys-108 and Cys-204 are joined by a disulfide bond. Gly-132 is a binding site for ATP. The tract at residues 154–156 (KDQ) is interaction with tRNA. Cys-204 serves as the catalytic Cysteine persulfide intermediate.

Belongs to the MnmA/TRMU family.

The protein resides in the cytoplasm. It carries out the reaction S-sulfanyl-L-cysteinyl-[protein] + uridine(34) in tRNA + AH2 + ATP = 2-thiouridine(34) in tRNA + L-cysteinyl-[protein] + A + AMP + diphosphate + H(+). In terms of biological role, catalyzes the 2-thiolation of uridine at the wobble position (U34) of tRNA, leading to the formation of s(2)U34. The protein is tRNA-specific 2-thiouridylase MnmA of Rickettsia bellii (strain OSU 85-389).